A 121-amino-acid chain; its full sequence is Large ribosomal subunit protein uL18 (121 aa).

This sequence belongs to the universal ribosomal protein uL18 family. Part of the 50S ribosomal subunit; part of the 5S rRNA/L5/L18/L25 subcomplex. Contacts the 5S and 23S rRNAs.

In terms of biological role, this is one of the proteins that bind and probably mediate the attachment of the 5S RNA into the large ribosomal subunit, where it forms part of the central protuberance. In Acidovorax ebreus (strain TPSY) (Diaphorobacter sp. (strain TPSY)), this protein is Large ribosomal subunit protein uL18.